The primary structure comprises 774 residues: MGQKRQRDQKGSGFQSKKRKRGANSSNADDKDDGWDGIVGVEDLNWKEVALPDRLDDAEGFFGLEEIEGVDIVRPEGSGEIRFKAKAGKPKKSILKNKTIPQEDKTFDDEWEGFSDGEAAQETTTTEPTEEPVQTTNEETEVKEKKEPKKKEAKKEVKKDAKNAKKEPKKKDLPSQKDKDIKPGLSFAALQDAEEDDGVDISAWESLGLSPEILNSLSKLKFSSPTAVQKSCIPPILDGHDVVGKASTGSGKTLAFGIPILEYYLEKKRRETKNKDDKKETSPIALILSPTRELAHQLVKHIGEVITHAPGVNARIALLTGGLSVQKQQRLLNGADIVIGTPGRVWEVLSGGQGLISKMKEIKYLVVDEADRLLSEGHFKEAHEILAALDREEINDFPGAEEDESDDEDSKTQRQTLVFSATFHRDLQQKLAGKGKWTGSDLMNKQESMEYLLKKLNFREEKPKFIDVNPVSQMAEGLKEGIVECAAMEKDLYLYTLLLYHPKHRTLVFTNSISAVRRLTQFLQALQLPALALHSSMAQKARLRSVERFSSPTADPSTILVATDVAARGLDIKGIDFVIHYHAPRTADTYVHRSGRTARAGASGKSVIICAPEEMVGVVRLAAKVHANMANGKRLPLESLELDRRIVSRVKQRVTLAARICDANIAKEKVSAEDNWLKNAAEELGVDYDSEEFDERQGRGRGRGRGRQQRERQASSISKAELAGMRAELKQLLSQRVNVGVSERYLTSGRVDIEALLRGEGNASFLGQVDPLGF.

The segment covering 1–10 (MGQKRQRDQK) has biased composition (basic and acidic residues). Disordered regions lie at residues 1 to 37 (MGQK…GWDG) and 87 to 183 (AGKP…DIKP). Over residues 106-115 (TFDDEWEGFS) the composition is skewed to acidic residues. Low complexity predominate over residues 118 to 137 (EAAQETTTTEPTEEPVQTTN). A compositionally biased stretch (basic and acidic residues) spans 140-182 (TEVKEKKEPKKKEAKKEVKKDAKNAKKEPKKKDLPSQKDKDIK). Residues 202-230 (SAWESLGLSPEILNSLSKLKFSSPTAVQK) carry the Q motif motif. A Helicase ATP-binding domain is found at 233-441 (IPPILDGHDV…AGKGKWTGSD (209 aa)). Residue 246–253 (ASTGSGKT) coordinates ATP. The short motif at 368–371 (DEAD) is the DEAD box element. Residues 493-643 (YLYTLLLYHP…RLPLESLELD (151 aa)) form the Helicase C-terminal domain. Residues 689-718 (DSEEFDERQGRGRGRGRGRQQRERQASSIS) are disordered.

This sequence belongs to the DEAD box helicase family. DDX24/MAK5 subfamily.

It is found in the nucleus. The protein localises to the nucleolus. It carries out the reaction ATP + H2O = ADP + phosphate + H(+). Its function is as follows. ATP-binding RNA helicase involved in the biogenesis of 60S ribosomal subunits and is required for the normal formation of 25S and 5.8S rRNAs. The protein is ATP-dependent RNA helicase mak5 (mak5) of Aspergillus terreus (strain NIH 2624 / FGSC A1156).